Consider the following 415-residue polypeptide: Carboxypeptidase B (415 aa).

Positions 1–13 (MLLLLALVSVALA) are cleaved as a signal peptide. Residues 14 to 108 (HASEEHFDGN…LESQFDSHTR (95 aa)) constitute a propeptide, activation peptide. Residues 116-410 (KYNKWETIEA…LAVKYIANYV (295 aa)) enclose the Peptidase M14 domain. An intrachain disulfide couples Cys171 to Cys184. His174 and Glu177 together coordinate Zn(2+). Substrate contacts are provided by residues 174–177 (HARE), Arg232, and 249–250 (NR). 2 cysteine pairs are disulfide-bonded: Cys243-Cys266 and Cys257-Cys271. Zn(2+) is bound at residue His302. Substrate contacts are provided by residues 303-304 (SY) and Tyr354. Residue Glu376 is the Proton donor/acceptor of the active site.

It belongs to the peptidase M14 family. Zn(2+) is required as a cofactor.

Its subcellular location is the secreted. The protein resides in the zymogen granule lumen. The enzyme catalyses Preferential release of a C-terminal lysine or arginine amino acid.. The protein is Carboxypeptidase B (Cpb1) of Rattus norvegicus (Rat).